The sequence spans 676 residues: Envelope glycoprotein (676 aa).

A signal peptide spans 1-32 (MGGLSLLQLPRDKFRKSSFFVWVIILFQKAFS). Residues 33 to 185 (MPLGVVTNST…FAEGVIAFLI (153 aa)) are receptor binding. The Extracellular portion of the chain corresponds to 33-650 (MPLGVVTNST…DDNWWTGWRQ (618 aa)). N-linked (GlcNAc...) asparagine; by host glycosylation occurs at Asn-40. 5 disulfide bridges follow: Cys-53–Cys-609, Cys-108–Cys-135, Cys-121–Cys-147, Cys-511–Cys-556, and Cys-601–Cys-608. 8 N-linked (GlcNAc...) asparagine; by host glycosylation sites follow: Asn-204, Asn-208, Asn-238, Asn-257, Asn-268, Asn-296, Asn-314, and Asn-366. Residues 305 to 485 (ELSFEALSLN…STSNGLITST (181 aa)) are mucin-like region. Disordered stretches follow at residues 337-373 (RKYSDLVPKNSPGMVPLHIPEGETTLPSQNSTEGRRV) and 404-461 (RPSS…LTTP). 2 stretches are compositionally biased toward low complexity: residues 405–428 (PSSSQIPSSSPTTAPSPEAQTPTT) and 449–461 (PGPTTEAPTLTTP). An N-linked (GlcNAc...) asparagine; by host glycan is attached at Asn-463. The segment at 524 to 539 (HNAAGIAWIPYFGPGA) is fusion peptide. The stretch at 554–595 (LVCGLRQLANETTQALQLFLRATTELRTYTILNRKAIDFLLR) forms a coiled coil. Asn-563 is a glycosylation site (N-linked (GlcNAc...) asparagine; by host). Positions 615–634 (WTKNITDKINQIIHDFIDNP) form a coiled coil. An N-linked (GlcNAc...) asparagine; by host glycan is attached at Asn-618. A helical transmembrane segment spans residues 651–671 (WIPAGIGITGIIIAIIALLCV). S-palmitoyl cysteine; by host attachment occurs at residues Cys-670 and Cys-672. Over 672–676 (CKLLC) the chain is Cytoplasmic.

It belongs to the filoviruses glycoprotein family. In terms of assembly, homotrimer; each monomer consists of a GP1 and a GP2 subunit linked by disulfide bonds. The resulting peplomers (GP1,2) protrude from the virus surface as spikes. Interacts with host integrin alpha-V/ITGAV. Interacts with host CLEC10A. Binds also to host CD209 and CLEC4M/DC-SIGN(R). Interacts with host FOLR1. Interacts with BST2; this interaction inhibits the antiviral effect of BST2 and this allows viral release from infected cells. Interacts with host FCN1; this interaction enhances viral entry. Interacts with host TLR4; this interaction induces cell death in T-lymphocytes or proinflammatory cytokines and SOCS1 production in monocytes. As to quaternary structure, interacts with host entry receptor NPC1. GP1 and GP2delta are part of GP1,2delta soluble complexes released by ectodomain shedding. Post-translationally, N-glycosylated. In terms of processing, O-glycosylated in the mucin-like region. Palmitoylation of GP2 is not required for its function. Post-translationally, specific enzymatic cleavages in vivo yield mature proteins. The precursor is processed into GP1 and GP2 by host cell furin in the trans Golgi, and maybe by other host proteases, to yield the mature GP1 and GP2 proteins. The cleavage site corresponds to the furin optimal cleavage sequence [KR]-X-[KR]-R. This cleavage does not seem to be required for function. After the internalization of the virus into cell endosomes, GP1 C-terminus is removed by the endosomal proteases cathepsin B, cathepsin L, or both, leaving a 19-kDa N-terminal fragment which is further digested by cathepsin B. Proteolytic processing of GP1,2 by host ADAM17 can remove the transmembrane anchor of GP2 and leads to shedding of complexes consisting in GP1 and truncated GP2 (GP1,2delta).

Its subcellular location is the virion membrane. It is found in the host cell membrane. It localises to the secreted. In terms of biological role, trimeric GP1,2 complexes form the virion surface spikes and mediate the viral entry processes, with GP1 acting as the receptor-binding subunit and GP2 as the membrane fusion subunit. At later times of infection, down-regulates the expression of various host cell surface molecules that are essential for immune surveillance and cell adhesion. Down-modulates several integrins including ITGA1, ITGA2, ITGA3, ITGA4, ITGA5, ITGA6, ITGAV and ITGB1. This decrease in cell adhesion molecules may lead to cell detachment, contributing to the disruption of blood vessel integrity and hemorrhages developed during infection (cytotoxicity). Interacts with host TLR4 and thereby stimulates the differentiation and activation of monocytes leading to bystander death of T-lymphocytes. Down-regulates as well the function of host natural killer cells. Counteracts the antiviral effect of host BST2/tetherin that restricts release of progeny virions from infected cells. However, cooperates with VP40 and host BST2 to activate canonical NF-kappa-B pathway in a manner dependent on neddylation. Its function is as follows. Functions as a decoy for anti-GP1,2 antibodies thereby contributing to viral immune evasion. Interacts and activates host macrophages and dendritic cells inducing up-regulation of cytokine transcription. This effect is mediated throught activation of host TLR4. Functionally, responsible for binding to the receptor(s) on target cells. Interacts with CD209/DC-SIGN and CLEC4M/DC-SIGNR which act as cofactors for virus entry into dendritic cells (DCs) and endothelial cells. Binding to the macrophage specific lectin CLEC10A also seems to enhance virus infectivity. Interaction with FOLR1/folate receptor alpha may be a cofactor for virus entry in some cell types, although results are contradictory. Members of the Tyro3 receptor tyrosine kinase family also seem to be cell entry factors in filovirus infection. Once attached, the virions are internalized through clathrin-dependent endocytosis and/or macropinocytosis. After internalization of the virus into the endosomes of the host cell, proteolysis of GP1 by two cysteine proteases, CTSB/cathepsin B and CTSL/cathepsin L removes the glycan cap and allows GP1 binding to the host entry receptor NPC1. NPC1-binding, Ca(2+) and acidic pH induce a conformational change of GP2, which unmasks its fusion peptide and permit membranes fusion. Acts as a class I viral fusion protein. Under the current model, the protein has at least 3 conformational states: pre-fusion native state, pre-hairpin intermediate state, and post-fusion hairpin state. During viral and target cell membrane fusion, the coiled coil regions (heptad repeats) assume a trimer-of-hairpins structure, positioning the fusion peptide in close proximity to the C-terminal region of the ectodomain. The formation of this structure appears to drive apposition and subsequent fusion of viral and target cell membranes. Responsible for penetration of the virus into the cell cytoplasm by mediating the fusion of the membrane of the endocytosed virus particle with the endosomal membrane. Low pH in endosomes induces an irreversible conformational change in GP2, releasing the fusion hydrophobic peptide. The chain is Envelope glycoprotein (GP) from Sudan ebolavirus (strain Human/Uganda/Gulu/2000) (SEBOV).